The following is a 74-amino-acid chain: DNA-directed RNA polymerase subunit omega (74 aa).

Belongs to the RNA polymerase subunit omega family. In terms of assembly, the RNAP catalytic core consists of 2 alpha, 1 beta, 1 beta' and 1 omega subunit. When a sigma factor is associated with the core the holoenzyme is formed, which can initiate transcription.

It carries out the reaction RNA(n) + a ribonucleoside 5'-triphosphate = RNA(n+1) + diphosphate. Its function is as follows. Promotes RNA polymerase assembly. Latches the N- and C-terminal regions of the beta' subunit thereby facilitating its interaction with the beta and alpha subunits. The sequence is that of DNA-directed RNA polymerase subunit omega from Lactobacillus acidophilus (strain ATCC 700396 / NCK56 / N2 / NCFM).